We begin with the raw amino-acid sequence, 245 residues long: DNA repair protein RecO (245 aa).

This sequence belongs to the RecO family.

Involved in DNA repair and RecF pathway recombination. This chain is DNA repair protein RecO, found in Chromobacterium violaceum (strain ATCC 12472 / DSM 30191 / JCM 1249 / CCUG 213 / NBRC 12614 / NCIMB 9131 / NCTC 9757 / MK).